The sequence spans 921 residues: GPI ethanolamine phosphate transferase 1 (921 aa).

The Cytoplasmic segment spans residues 1–9 (MKNNTRFTL). A helical transmembrane segment spans residues 10-30 (IVVGVLFHLLYLWSIFDIYFI). The Lumenal segment spans residues 31-457 (SPLVHGMEQK…TTYNWRFIRT (427 aa)). N-linked (GlcNAc...) asparagine glycans are attached at residues Asn-90, Asn-138, Asn-198, Asn-262, and Asn-286. The chain crosses the membrane as a helical span at residues 458 to 478 (IVTFGFLGWICYSFMIFLKLF). Residues 479–488 (ILNNSQTTHP) are Cytoplasmic-facing. The chain crosses the membrane as a helical span at residues 489–509 (SILNISIFTSLGLILNYILFY). At 510 to 516 (QKSPLNF) the chain is on the lumenal side. Residues 517–537 (YLYLIFPLFFWSKIFSNTAII) traverse the membrane as a helical segment. Topologically, residues 538-552 (RDGVNEFFKGISKAE) are cytoplasmic. The chain crosses the membrane as a helical span at residues 553-573 (SVIIGLTIISIYEGIVYGFFH). At 574–575 (RW) the chain is on the lumenal side. The chain crosses the membrane as a helical span at residues 576-596 (ILSLILVSFAFYPLVCGVTDL). Residues 597 to 599 (FTN) are Cytoplasmic-facing. A helical transmembrane segment spans residues 600-620 (LLWILTSVGLSSFTLLDAVKI). Residue Glu-621 is a topological domain, lumenal. The chain crosses the membrane as a helical span at residues 622–642 (NLQQIQVAGILIVLSSAYAVM). Topologically, residues 643-654 (RLSQDISKYTQH) are cytoplasmic. A helical transmembrane segment spans residues 655 to 675 (LLSIQIFLVSGMLHFTSKSVI). Topologically, residues 676-684 (SLQKREGLP) are lumenal. The helical transmembrane segment at 685–705 (AFAQVGGWAILVISLTIMPFL) threads the bilayer. Topologically, residues 706 to 728 (HYLKPNNNYQVRLLTIYLTFAPS) are cytoplasmic. A helical transmembrane segment spans residues 729-749 (FIILSISFEALFYFIFTAYIV). The Lumenal segment spans residues 750–777 (QWLQIEKNIKVLKDEQKSDSNGIQLLRV). The helical transmembrane segment at 778–798 (AIIGFFLQQIAFFGTGNVASI) threads the bilayer. Over 799–819 (SSFSLDSVYRLLPVFDPFPMG) the chain is Cytoplasmic. The helical transmembrane segment at 820–840 (ALLMLKLIIPYVLLSCGLGIM) threads the bilayer. The Lumenal segment spans residues 841–849 (NIQLDIKDY). Residues 850 to 870 (TISSLIISTSDILSLNFFYLL) traverse the membrane as a helical segment. Residues 871 to 878 (KTEGSWLD) lie on the Cytoplasmic side of the membrane. The chain crosses the membrane as a helical span at residues 879-899 (IGVTISNYCLAILSSLFMLIL). The Lumenal portion of the chain corresponds to 900 to 921 (EIVGHQLLKNVTRATSSQKKTN). An N-linked (GlcNAc...) asparagine glycan is attached at Asn-909.

The protein belongs to the PIGG/PIGN/PIGO family. PIGN subfamily.

It is found in the endoplasmic reticulum membrane. Its pathway is glycolipid biosynthesis; glycosylphosphatidylinositol-anchor biosynthesis. Functionally, ethanolamine phosphate transferase involved in glycosylphosphatidylinositol-anchor biosynthesis. Transfers ethanolamine phosphate to the first alpha-1,4-linked mannose of the glycosylphosphatidylinositol precursor of GPI-anchor. The polypeptide is GPI ethanolamine phosphate transferase 1 (MCD4) (Candida glabrata (strain ATCC 2001 / BCRC 20586 / JCM 3761 / NBRC 0622 / NRRL Y-65 / CBS 138) (Yeast)).